We begin with the raw amino-acid sequence, 470 residues long: MKLLSILFIFVSSYSFCLAAPATDKVNDLPGLTFTPDFFHYSGYLRAWTDKYLHYWLTESSRAPTQDPLVLWLNGGPGCSSLDGLIEELGPFHVKDFGNSIYYNEYAWNKFANVLFLESPAGVGYSYSTNFNLTVSDDEVSLHNYMALLDFLSKFPEYKGRDFWITGESYAGVYIPTLAVRILNDKKNFPNFKGVAIGNGALNFPNNYNTMVPFYYYHALVRDDLYNDIARNCCNNNIGTCDIYSKFFDPNCRDKVINALDGTNELNMYNLYDVCYYNPTTNLKKAFIERQMRIAVGLPARKHNAATTVPLCAQTNNTHVYLNRADVRKSLHIPSSLPAWEECSDQVGKNYVVTHFNVIPEFQTMIAAGIKILVYNGDVDTACNSIMNQQFLTSLNLTVLGEQEKVNEAWHYSGQTGTAVAGFQTKFAGNVDFLTVRGSGHFVPEDKPKESQQMIFNFINNKDYSTPIQL.

The first 19 residues, 1–19 (MKLLSILFIFVSSYSFCLA), serve as a signal peptide directing secretion. Asparagine 132 carries an N-linked (GlcNAc...) asparagine glycan. The active site involves serine 169. Asparagine 316 carries an N-linked (GlcNAc...) asparagine glycan. Aspartate 380 is a catalytic residue. Residue asparagine 396 is glycosylated (N-linked (GlcNAc...) asparagine). The active site involves histidine 441.

The protein belongs to the peptidase S10 family.

The catalysed reaction is Release of a C-terminal amino acid with broad specificity.. The chain is Serine carboxypeptidase ctsa-4.1 from Caenorhabditis elegans.